Reading from the N-terminus, the 136-residue chain is Active regulator of SIRT1 (136 aa).

A Citrulline modification is found at Arg7. A disordered region spans residues 13–58; sequence LAASEAPRDPPGQAKPRGAPVKRPRKTKAIQAQKLRNSAKGKVPKS. Position 84 is a phosphoserine (Ser84).

This sequence belongs to the AROS family. Part of the small subunit (SSU) processome, composed of more than 70 proteins and the RNA chaperone small nucleolar RNA (snoRNA) U3. Interacts with RPS19; the interaction is direct and mediates the integration of RPS19 in state post-A1. Interacts with SIRT1. Citrullinated by PADI4. Widely expressed (at protein level).

Its subcellular location is the nucleus. The protein resides in the nucleolus. In terms of biological role, part of the small subunit (SSU) processome, first precursor of the small eukaryotic ribosomal subunit. During the assembly of the SSU processome in the nucleolus, many ribosome biogenesis factors, an RNA chaperone and ribosomal proteins associate with the nascent pre-rRNA and work in concert to generate RNA folding, modifications, rearrangements and cleavage as well as targeted degradation of pre-ribosomal RNA by the RNA exosome. Acts as a chaperone that specifically mediates the integration of RPS19 in state post-A1. Direct regulator of SIRT1. Enhances SIRT1-mediated deacetylation of p53/TP53, thereby participating in inhibition of p53/TP53-mediated transcriptional activity. This Homo sapiens (Human) protein is Active regulator of SIRT1.